The following is a 99-amino-acid chain: Putative septation protein SpoVG (99 aa).

It belongs to the SpoVG family.

Could be involved in septation. The chain is Putative septation protein SpoVG from Onion yellows phytoplasma (strain OY-M).